A 122-amino-acid polypeptide reads, in one-letter code: Large ribosomal subunit protein uL14 (122 aa).

It belongs to the universal ribosomal protein uL14 family. In terms of assembly, part of the 50S ribosomal subunit. Forms a cluster with proteins L3 and L19. In the 70S ribosome, L14 and L19 interact and together make contacts with the 16S rRNA in bridges B5 and B8.

Its function is as follows. Binds to 23S rRNA. Forms part of two intersubunit bridges in the 70S ribosome. The polypeptide is Large ribosomal subunit protein uL14 (Campylobacter fetus subsp. fetus (strain 82-40)).